Consider the following 265-residue polypeptide: 5'-nucleotidase SurE (265 aa).

Asp-8, Asp-9, Ser-39, and Asn-96 together coordinate a divalent metal cation.

This sequence belongs to the SurE nucleotidase family. A divalent metal cation is required as a cofactor.

The protein localises to the cytoplasm. The catalysed reaction is a ribonucleoside 5'-phosphate + H2O = a ribonucleoside + phosphate. Its function is as follows. Nucleotidase that shows phosphatase activity on nucleoside 5'-monophosphates. This is 5'-nucleotidase SurE from Rubrobacter xylanophilus (strain DSM 9941 / JCM 11954 / NBRC 16129 / PRD-1).